The sequence spans 479 residues: Probable periplasmic serine endoprotease DegP-like (479 aa).

The signal sequence occupies residues 1–27 (MSMPSLKKYAAALFAVFLMGQSVAAHA). Active-site charge relay system residues include His118, Asp148, and Ser221. Substrate contacts are provided by residues 219 to 221 (GNS) and 276 to 280 (LGVVI). 2 PDZ domains span residues 265 to 356 (LKAS…VREG) and 362 to 468 (KVAV…LRQG). The disordered stretch occupies residues 368–390 (MPADDGDEATNDAAPSAERSSNR).

This sequence belongs to the peptidase S1C family.

It is found in the periplasm. It carries out the reaction Acts on substrates that are at least partially unfolded. The cleavage site P1 residue is normally between a pair of hydrophobic residues, such as Val-|-Val.. Its function is as follows. Might be efficient in the degradation of transiently denatured and unfolded proteins which accumulate in the periplasm following stress conditions. The sequence is that of Probable periplasmic serine endoprotease DegP-like from Pseudomonas fulva (strain 12-X).